A 64-amino-acid chain; its full sequence is Large ribosomal subunit protein bL35 (64 aa).

A compositionally biased stretch (basic residues) spans M1 to K14. The disordered stretch occupies residues M1 to D48. Over residues L21–P36 the composition is skewed to basic and acidic residues.

This sequence belongs to the bacterial ribosomal protein bL35 family.

The chain is Large ribosomal subunit protein bL35 from Corynebacterium aurimucosum (strain ATCC 700975 / DSM 44827 / CIP 107346 / CN-1) (Corynebacterium nigricans).